The following is a 194-amino-acid chain: Small ribosomal subunit protein uS4c (194 aa).

One can recognise an S4 RNA-binding domain in the interval 82–143; that stretch reads MRLDNILFRL…KERSKVLIQN (62 aa).

Belongs to the universal ribosomal protein uS4 family. Part of the 30S ribosomal subunit. Contacts protein S5. The interaction surface between S4 and S5 is involved in control of translational fidelity.

Its subcellular location is the plastid. It localises to the chloroplast. In terms of biological role, one of the primary rRNA binding proteins, it binds directly to 16S rRNA where it nucleates assembly of the body of the 30S subunit. With S5 and S12 plays an important role in translational accuracy. The polypeptide is Small ribosomal subunit protein uS4c (rps4) (Cypella sp. (strain Porto Alegre 027)).